The chain runs to 301 residues: MNFAQVKDYLVDLQNRIVTGLEQVDGQSFRRDTWDRPEGGGGTSCVIEEGNVLERGGVNFSHVFGKGLPASATAARPELAGRAFEAAGVSLVLHPRNPYAPTVHMNVRFFAATKEGAEPVWWFGGGMDLTPYYGFEEDAVHFHQACKDALQPSGEEYYPRFKKWCDEYFYLKHRKEPRGIGGVFFDDLNQPDFATCFNLTRSVGDHFLAAYVPILQKRRDLPYGERERDFQAYRRGRYVEFNLVWDRGTLFGLQSGGRTESILMSLPPVVKWRYDWSPAAGSPEAKLYTDFLTGRDWLPLG.

S90 lines the substrate pocket. A divalent metal cation contacts are provided by H94 and H104. H104 functions as the Proton donor in the catalytic mechanism. 106-108 (NVR) contacts substrate. A divalent metal cation-binding residues include H143 and H173. The interval 238-273 (YVEFNLVWDRGTLFGLQSGGRTESILMSLPPVVKWR) is important for dimerization. 256-258 (GGR) contacts substrate.

It belongs to the aerobic coproporphyrinogen-III oxidase family. In terms of assembly, homodimer. Requires a divalent metal cation as cofactor.

It localises to the cytoplasm. It catalyses the reaction coproporphyrinogen III + O2 + 2 H(+) = protoporphyrinogen IX + 2 CO2 + 2 H2O. It participates in porphyrin-containing compound metabolism; protoporphyrin-IX biosynthesis; protoporphyrinogen-IX from coproporphyrinogen-III (O2 route): step 1/1. Its function is as follows. Involved in the heme biosynthesis. Catalyzes the aerobic oxidative decarboxylation of propionate groups of rings A and B of coproporphyrinogen-III to yield the vinyl groups in protoporphyrinogen-IX. In Nitrosomonas europaea (strain ATCC 19718 / CIP 103999 / KCTC 2705 / NBRC 14298), this protein is Oxygen-dependent coproporphyrinogen-III oxidase.